A 1091-amino-acid polypeptide reads, in one-letter code: Leucine--tRNA ligase, cytoplasmic (1091 aa).

A 'HIGH' region motif is present at residues proline 53–histidine 63. The 'KMSKS' region motif lies at lysine 715 to serine 719. Lysine 718 provides a ligand contact to ATP.

This sequence belongs to the class-I aminoacyl-tRNA synthetase family.

It localises to the cytoplasm. The protein resides in the cytosol. It catalyses the reaction tRNA(Leu) + L-leucine + ATP = L-leucyl-tRNA(Leu) + AMP + diphosphate. In terms of biological role, catalyzes the specific attachment of an amino acid to its cognate tRNA in a two step reaction: the amino acid (AA) is first activated by ATP to form AA-AMP and then transferred to the acceptor end of the tRNA. The chain is Leucine--tRNA ligase, cytoplasmic from Arabidopsis thaliana (Mouse-ear cress).